Consider the following 616-residue polypeptide: Cytochrome c oxidase subunit 1 (616 aa).

A helical transmembrane segment spans residues 28–48 (HLYLISGGFFFLLGGLEALFI). His72 provides a ligand contact to Fe(II)-heme a. Transmembrane regions (helical) follow at residues 75–95 (TMIF…VVPL), 102–122 (VAFP…GLFL), 158–178 (GLQI…VTII), 198–218 (FVTS…LIFM), 243–263 (LFWV…FGIF), and 275–295 (LFGY…GFMV). Residues His249 and Tyr253 each coordinate Cu cation. The segment at residues 249–253 (HPEVY) is a cross-link (1'-histidyl-3'-tyrosine (His-Tyr)). Residues His298 and His299 each contribute to the Cu cation site. 7 helical membrane passes run 303–323 (VGMG…IAVP), 349–369 (AVAF…LASA), 380–400 (FVVA…LLAG), 420–440 (ITFW…HFLG), 463–483 (ISTI…INIV), 553–573 (SSFL…GFTY), and 577–597 (AGWG…SMFL). His384 contributes to the Fe(II)-heme o binding site. Heme a3 is bound at residue His384. Residue His386 participates in Fe(II)-heme a binding.

The protein belongs to the heme-copper respiratory oxidase family. The cofactor is Cu(2+). It depends on heme as a cofactor.

It is found in the cell membrane. It catalyses the reaction 4 Fe(II)-[cytochrome c] + O2 + 8 H(+)(in) = 4 Fe(III)-[cytochrome c] + 2 H2O + 4 H(+)(out). It participates in energy metabolism; oxidative phosphorylation. Cytochrome c oxidase is the component of the respiratory chain that catalyzes the reduction of oxygen to water. Subunits 1-3 form the functional core of the enzyme complex. Co I is the catalytic subunit of the enzyme. Electrons originating in cytochrome c are transferred via the copper A center of subunit 2 and heme a of subunit 1 to the bimetallic center formed by heme a3 and copper B. This cytochrome c oxidase shows proton pump activity across the membrane in addition to the electron transfer. This is Cytochrome c oxidase subunit 1 (ctaD) from Bacillus sp. (strain PS3).